Here is a 315-residue protein sequence, read N- to C-terminus: tRNA dimethylallyltransferase (315 aa).

13-20 (GPTASGKT) contacts ATP. 15–20 (TASGKT) lines the substrate pocket. 3 interaction with substrate tRNA regions span residues 38–41 (DSAL), 162–166 (QRIQR), and 245–250 (RCVGYR).

The protein belongs to the IPP transferase family. In terms of assembly, monomer. It depends on Mg(2+) as a cofactor.

It catalyses the reaction adenosine(37) in tRNA + dimethylallyl diphosphate = N(6)-dimethylallyladenosine(37) in tRNA + diphosphate. Functionally, catalyzes the transfer of a dimethylallyl group onto the adenine at position 37 in tRNAs that read codons beginning with uridine, leading to the formation of N6-(dimethylallyl)adenosine (i(6)A). The polypeptide is tRNA dimethylallyltransferase (Methylobacillus flagellatus (strain ATCC 51484 / DSM 6875 / VKM B-1610 / KT)).